Reading from the N-terminus, the 955-residue chain is 2-oxoglutarate dehydrogenase E1 component (955 aa).

It belongs to the alpha-ketoglutarate dehydrogenase family. In terms of assembly, homodimer. Part of the 2-oxoglutarate dehydrogenase (OGDH) complex composed of E1 (2-oxoglutarate dehydrogenase), E2 (dihydrolipoamide succinyltransferase) and E3 (dihydrolipoamide dehydrogenase); the complex contains multiple copies of the three enzymatic components (E1, E2 and E3). Requires thiamine diphosphate as cofactor.

It carries out the reaction N(6)-[(R)-lipoyl]-L-lysyl-[protein] + 2-oxoglutarate + H(+) = N(6)-[(R)-S(8)-succinyldihydrolipoyl]-L-lysyl-[protein] + CO2. E1 component of the 2-oxoglutarate dehydrogenase (OGDH) complex which catalyzes the decarboxylation of 2-oxoglutarate, the first step in the conversion of 2-oxoglutarate to succinyl-CoA and CO(2). The protein is 2-oxoglutarate dehydrogenase E1 component of Bacillus cereus (strain ATCC 14579 / DSM 31 / CCUG 7414 / JCM 2152 / NBRC 15305 / NCIMB 9373 / NCTC 2599 / NRRL B-3711).